Consider the following 292-residue polypeptide: Elongation factor Ts (292 aa).

The involved in Mg(2+) ion dislocation from EF-Tu stretch occupies residues 80–83; it reads TDFV.

This sequence belongs to the EF-Ts family.

It localises to the cytoplasm. Functionally, associates with the EF-Tu.GDP complex and induces the exchange of GDP to GTP. It remains bound to the aminoacyl-tRNA.EF-Tu.GTP complex up to the GTP hydrolysis stage on the ribosome. This Limosilactobacillus fermentum (strain NBRC 3956 / LMG 18251) (Lactobacillus fermentum) protein is Elongation factor Ts.